The following is a 604-amino-acid chain: MHRYRSHTCGALRPSDVGSTVRLSGWCHRVRDHGGVLFIDLRDHYGLTQCVVDADSPAFRAAEAVRSEWVIRIDGRVRQRPAGTENPDLPTGAVEVYIADLEVLGHAVELPMPVFGDLDYPEETRLRYRFLDLRREKLHANIMKRGAIIDSLRRRMREGGFFEFQTPILTASSPEGARDFLVPSRLHPGKFYALPQAPQQFKQLTMIAGFDRYFQIAPCFRDEDARADRSPGEFYQLDIEMSFVTQEDVFQAVEPVLRGVFEEFADGWRVTQSFPRIPYAEAMLKYGVDKPDLRNPLLIVDVTEEFSAEAVTFNAFKNLIRAGGVVRAIPAPGAASQPRSFFDKLNDWARSEGAPGLGYIVFEEEGGQLIGRGPIAKFVPAEVQAAIAGKAGLKAGDAVFFSAGTEAKAAGLAGKARIRIGDDLGLSDKDQFAFCWITDFPMYEWNEDEKRIDFSHNPFSMPNYDHKAFLALDPADADTILGIKAFQYDIVCNGIELSSGAIRNHRPDVMEKAFAIAGYGRDVLEQKFGGMLNALRMGAPPHGGIAPGVDRIVMLLCHEPNIREVVLFPMNQRAEDLMMGAPSEVTAKQLRELHIRLNLPEKSA.

Glutamate 175 provides a ligand contact to L-aspartate. The interval 199 to 202 is aspartate; it reads QQFK. Residues arginine 221 and histidine 456 each contribute to the L-aspartate site. An ATP-binding site is contributed by 221–223; the sequence is RDE. Glutamate 496 is an ATP binding site. Residue arginine 503 coordinates L-aspartate. An ATP-binding site is contributed by 548-551; it reads GVDR.

The protein belongs to the class-II aminoacyl-tRNA synthetase family. Type 1 subfamily. Homodimer.

The protein resides in the cytoplasm. The enzyme catalyses tRNA(Asx) + L-aspartate + ATP = L-aspartyl-tRNA(Asx) + AMP + diphosphate. Its function is as follows. Aspartyl-tRNA synthetase with relaxed tRNA specificity since it is able to aspartylate not only its cognate tRNA(Asp) but also tRNA(Asn). Reaction proceeds in two steps: L-aspartate is first activated by ATP to form Asp-AMP and then transferred to the acceptor end of tRNA(Asp/Asn). In Methylobacterium nodulans (strain LMG 21967 / CNCM I-2342 / ORS 2060), this protein is Aspartate--tRNA(Asp/Asn) ligase.